The sequence spans 142 residues: Immunoglobulin iota chain (142 aa).

Residues 1–19 (MAWTSVLLMLLAYLTGCGP) form the signal peptide. The interval 20–41 (QPMVHQPPLASSSLGATIRLSC) is framework-1. A disulfide bridge connects residues Cys41 and Cys115. Residues 42-56 (TLSNDHNIGIYSIYW) are complementarity-determining-1. The interval 57 to 70 (YQQRPGHPPRFLLR) is framework-2. The complementarity-determining-2 stretch occupies residues 71-81 (YFSHSDKHQGP). A framework-3 region spans residues 82–115 (DIPPRFSGSKDTTRNLGYLSISELQPEDEAVYYC).

This sequence belongs to the immunoglobulin superfamily. In terms of assembly, interacts with IGLL1. Interacts with SYNV1/HRD1 (via N-terminus); this interaction leads to increased VPREB1A ubiquitination and degradation in pre-B cells, possibly through a lysosomal, not proteasomal, pathway. In terms of tissue distribution, only expressed by pre-B-cells.

Its subcellular location is the endoplasmic reticulum. Associates with the Ig-mu chain to form a molecular complex that is expressed on the surface of pre-B-cells. This complex presumably regulates Ig gene rearrangements in the early steps of B-cell differentiation. This chain is Immunoglobulin iota chain, found in Mus musculus (Mouse).